The following is a 287-amino-acid chain: Ciliary microtubule inner protein 6 (287 aa).

Basic and acidic residues-rich tracts occupy residues 1-15 and 25-34; these read MEEKEDKHQQHKIED and EEIKHEEKPG. A disordered region spans residues 1–42; sequence MEEKEDKHQQHKIEDAAITYVSENEEIKHEEKPGKSIHHSKS. A mn 1 region spans residues 128-160; sequence GIVPLASPGTSAELQNNFIEYISFIHQYDARKT. The interval 179-287 is disordered; that stretch reads KPGSRPTVPK…PLNPPIKKSE (109 aa). Composition is skewed to basic and acidic residues over residues 203–212 and 232–245; these read EQSKKTEKGN and LEPKTHLSETDVRQ. A mn 2 region spans residues 213–246; the sequence is SAESRMISPGLCQQNSQELLEPKTHLSETDVRQA.

The protein resides in the cell projection. It localises to the cilium. This is Ciliary microtubule inner protein 6 from Homo sapiens (Human).